A 119-amino-acid polypeptide reads, in one-letter code: MKIASLKLLLLVSLLFAVTQNGISIQNSETSVNQNSCMPNEPRCTGCPGGGSGGYRGPPPPCCKNDSDCKAHCPEGGYCSNQCDCVCNLVKVMNNDVRCQVDTDCNMKCSKQGYCKLAS.

The N-terminal stretch at 1-24 (MKIASLKLLLLVSLLFAVTQNGIS) is a signal peptide. 4 disulfides stabilise this stretch: Cys44–Cys99, Cys63–Cys79, Cys69–Cys83, and Cys73–Cys85.

Belongs to the DEFL family.

The protein localises to the secreted. The polypeptide is Defensin-like protein 260 (Arabidopsis thaliana (Mouse-ear cress)).